A 199-amino-acid polypeptide reads, in one-letter code: ATP-dependent Clp protease proteolytic subunit (199 aa).

Ser99 serves as the catalytic Nucleophile. The active site involves His124.

The protein belongs to the peptidase S14 family. As to quaternary structure, fourteen ClpP subunits assemble into 2 heptameric rings which stack back to back to give a disk-like structure with a central cavity, resembling the structure of eukaryotic proteasomes.

The protein localises to the cytoplasm. It carries out the reaction Hydrolysis of proteins to small peptides in the presence of ATP and magnesium. alpha-casein is the usual test substrate. In the absence of ATP, only oligopeptides shorter than five residues are hydrolyzed (such as succinyl-Leu-Tyr-|-NHMec, and Leu-Tyr-Leu-|-Tyr-Trp, in which cleavage of the -Tyr-|-Leu- and -Tyr-|-Trp bonds also occurs).. Its function is as follows. Cleaves peptides in various proteins in a process that requires ATP hydrolysis. Has a chymotrypsin-like activity. Plays a major role in the degradation of misfolded proteins. The chain is ATP-dependent Clp protease proteolytic subunit from Lactococcus lactis subsp. lactis (strain IL1403) (Streptococcus lactis).